Reading from the N-terminus, the 541-residue chain is Reticulophagy regulator 2 (541 aa).

Helical transmembrane passes span 75 to 91 (LHSLVTAATLNGLFWLL), 99 to 115 (FFLLSISLLTYFLLDLW), and 199 to 219 (VPGIMISYIVLLSILLWPLVV). The disordered stretch occupies residues 249-282 (LHHKHDKRKRQGKNAPPAGDEPLAETESESEAEL). The span at 250–260 (HHKHDKRKRQG) shows a compositional bias: basic residues. Acidic residues predominate over residues 270–280 (PLAETESESEA). The residue at position 274 (threonine 274) is a Phosphothreonine. A phosphoserine mark is found at serine 276, serine 278, serine 286, and serine 306. Phosphothreonine is present on threonine 329. 3 disordered regions span residues 331–389 (VSED…ADKE), 403–440 (THFNGAGSPQEGVKCPPGGPVETLSPEAVSGDLMAPSS), and 459–481 (PSVLPSLPQDSPQALTAPEEEEA). Phosphoserine occurs at positions 332, 339, and 342. Residues 459 to 475 (PSVLPSLPQDSPQALTA) show a composition bias toward low complexity. The short motif at 485–490 (EDFELL) is the LIR motif element. The segment at 496–541 (EQLNAELGLGPEMPPKPPDVLPPPPLGPDSHSLVQSDQEAHAVVEP) is disordered. A compositionally biased stretch (pro residues) spans 507–522 (EMPPKPPDVLPPPPLG).

It belongs to the RETREG family. In terms of assembly, interacts with ATG8 family modifier proteins MAP1LC3A, MAP1LC3B, GABARAP, GABARAPL1 and GABARAPL2. Interacts with CANX.

The protein localises to the endoplasmic reticulum membrane. Its function is as follows. Endoplasmic reticulum (ER)-anchored autophagy regulator which exists in an inactive state under basal conditions but is activated following cellular stress. When activated, induces ER fragmentation and mediates ER delivery into lysosomes through sequestration into autophagosomes via interaction with ATG8 family proteins. Required for collagen quality control in a LIR motif-independent manner. This Rattus norvegicus (Rat) protein is Reticulophagy regulator 2 (Retreg2).